A 411-amino-acid chain; its full sequence is Serine hydroxymethyltransferase (411 aa).

120-122 (GHL) is a binding site for (6S)-5,6,7,8-tetrahydrofolate. The residue at position 225 (Lys-225) is an N6-(pyridoxal phosphate)lysine. Residue 350 to 352 (SPF) coordinates (6S)-5,6,7,8-tetrahydrofolate.

This sequence belongs to the SHMT family. In terms of assembly, homodimer. It depends on pyridoxal 5'-phosphate as a cofactor.

The protein resides in the cytoplasm. It carries out the reaction (6R)-5,10-methylene-5,6,7,8-tetrahydrofolate + glycine + H2O = (6S)-5,6,7,8-tetrahydrofolate + L-serine. Its pathway is one-carbon metabolism; tetrahydrofolate interconversion. It functions in the pathway amino-acid biosynthesis; glycine biosynthesis; glycine from L-serine: step 1/1. In terms of biological role, catalyzes the reversible interconversion of serine and glycine with tetrahydrofolate (THF) serving as the one-carbon carrier. This reaction serves as the major source of one-carbon groups required for the biosynthesis of purines, thymidylate, methionine, and other important biomolecules. Also exhibits THF-independent aldolase activity toward beta-hydroxyamino acids, producing glycine and aldehydes, via a retro-aldol mechanism. This chain is Serine hydroxymethyltransferase, found in Lactobacillus gasseri (strain ATCC 33323 / DSM 20243 / BCRC 14619 / CIP 102991 / JCM 1131 / KCTC 3163 / NCIMB 11718 / NCTC 13722 / AM63).